The following is a 174-amino-acid chain: Mating-type protein ALPHA2 (174 aa).

The segment at residues Gln108–Pro170 is a DNA-binding region (homeobox; TALE-type).

This sequence belongs to the TALE/M-ATYP homeobox family. In terms of assembly, forms a heterodimer with A1.

It localises to the nucleus. Its function is as follows. Mating type proteins are sequence specific DNA-binding proteins that act as master switches in yeast differentiation by controlling gene expression in a cell type-specific fashion. Transcriptional corepressor that acts in conjunction with A1 to repress transcription of haploid-specific genes and of MATALPHA1. The sequence is that of Mating-type protein ALPHA2 (MATALPHA2) from Nakaseomyces delphensis (Yeast).